We begin with the raw amino-acid sequence, 100 residues long: Small ribosomal subunit protein uS14c (100 aa).

It belongs to the universal ribosomal protein uS14 family. As to quaternary structure, part of the 30S ribosomal subunit.

Its subcellular location is the plastid. It localises to the chloroplast. Its function is as follows. Binds 16S rRNA, required for the assembly of 30S particles. In Vitis vinifera (Grape), this protein is Small ribosomal subunit protein uS14c.